The following is a 428-amino-acid chain: Kynureninase (428 aa).

Residues threonine 104, threonine 105, 132–135 (FPSD), aspartate 213, histidine 216, and tyrosine 238 contribute to the pyridoxal 5'-phosphate site. N6-(pyridoxal phosphate)lysine is present on lysine 239. 2 residues coordinate pyridoxal 5'-phosphate: tryptophan 267 and threonine 295.

Belongs to the kynureninase family. In terms of assembly, homodimer. The cofactor is pyridoxal 5'-phosphate.

It carries out the reaction L-kynurenine + H2O = anthranilate + L-alanine + H(+). The enzyme catalyses 3-hydroxy-L-kynurenine + H2O = 3-hydroxyanthranilate + L-alanine + H(+). Its pathway is amino-acid degradation; L-kynurenine degradation; L-alanine and anthranilate from L-kynurenine: step 1/1. It participates in cofactor biosynthesis; NAD(+) biosynthesis; quinolinate from L-kynurenine: step 2/3. Catalyzes the cleavage of L-kynurenine (L-Kyn) and L-3-hydroxykynurenine (L-3OHKyn) into anthranilic acid (AA) and 3-hydroxyanthranilic acid (3-OHAA), respectively. In Bacillus mycoides (strain KBAB4) (Bacillus weihenstephanensis), this protein is Kynureninase.